We begin with the raw amino-acid sequence, 210 residues long: Urease accessory protein UreG (210 aa).

A GTP-binding site is contributed by 14–21 (GPVGSGKT).

Belongs to the SIMIBI class G3E GTPase family. UreG subfamily. As to quaternary structure, homodimer. UreD, UreF and UreG form a complex that acts as a GTP-hydrolysis-dependent molecular chaperone, activating the urease apoprotein by helping to assemble the nickel containing metallocenter of UreC. The UreE protein probably delivers the nickel.

The protein localises to the cytoplasm. In terms of biological role, facilitates the functional incorporation of the urease nickel metallocenter. This process requires GTP hydrolysis, probably effectuated by UreG. This chain is Urease accessory protein UreG, found in Rhodopseudomonas palustris (strain BisB5).